We begin with the raw amino-acid sequence, 968 residues long: Isoleucine--tRNA ligase (968 aa).

The short motif at 68–78 is the 'HIGH' region element; sequence PYANGALHMGH. Glu584 is an L-isoleucyl-5'-AMP binding site. The 'KMSKS' region signature appears at 625–629; the sequence is KMSKS. Position 628 (Lys628) interacts with ATP. The Zn(2+) site is built by Cys938, Cys941, Cys958, and Cys961.

It belongs to the class-I aminoacyl-tRNA synthetase family. IleS type 1 subfamily. As to quaternary structure, monomer. The cofactor is Zn(2+).

The protein resides in the cytoplasm. The enzyme catalyses tRNA(Ile) + L-isoleucine + ATP = L-isoleucyl-tRNA(Ile) + AMP + diphosphate. Functionally, catalyzes the attachment of isoleucine to tRNA(Ile). As IleRS can inadvertently accommodate and process structurally similar amino acids such as valine, to avoid such errors it has two additional distinct tRNA(Ile)-dependent editing activities. One activity is designated as 'pretransfer' editing and involves the hydrolysis of activated Val-AMP. The other activity is designated 'posttransfer' editing and involves deacylation of mischarged Val-tRNA(Ile). The protein is Isoleucine--tRNA ligase of Synechococcus sp. (strain CC9311).